A 1275-amino-acid chain; its full sequence is Membrane-associated guanylate kinase, WW and PDZ domain-containing protein 2 (1275 aa).

In terms of domain architecture, PDZ 1 spans 17-101 (ESVIGRNPEG…PLRLKCVKQG (85 aa)). Residues 109-283 (RHYLNLRFQK…PVYSQPEELK (175 aa)) enclose the Guanylate kinase-like domain. Positions 203–305 (LPGATPSAEG…ENEDSDPLPD (103 aa)) are disordered. Over residues 280-295 (EELKDQMDDTKPTKPE) the composition is skewed to basic and acidic residues. 2 consecutive WW domains span residues 301–334 (DPLPDNWEMAYTEKGEVYFIDHNTKTTSWLDPRL) and 347–380 (NELPYGWEKIDDPIYGTYYVDHINRRTQFENPVL). The segment at 301-380 (DPLPDNWEMA…RRTQFENPVL (80 aa)) is interaction with DDN. Y361 carries the post-translational modification Phosphotyrosine. 2 consecutive PDZ domains span residues 425-509 (STTL…CRGY) and 604-682 (TLTI…HRGG). Residue S685 is modified to Phosphoserine. Residues 698-740 (ENQGSPQTSLSAPAVPQNLPFPPALHRSSFPDSTEAFDPRKPD) are disordered. Positions 699 to 708 (NQGSPQTSLS) are enriched in polar residues. The PDZ 4 domain occupies 777–859 (DVHLRRMESG…NGQVNLTVRR (83 aa)). At Y826 the chain carries Phosphotyrosine. The segment at 868–912 (CPENGRSPGSVSTHHSSPRSDYATYSNSNHAAPSSNASPPEGFAS) is disordered. 2 positions are modified to phosphoserine: S883 and S884. The segment covering 893-907 (SNSNHAAPSSNASPP) has biased composition (low complexity). Residues 919-1009 (DVVIHRKENE…SVTLRIIPQE (91 aa)) enclose the PDZ 5 domain. A compositionally biased stretch (polar residues) spans 1010 to 1040 (ELNSPTSAPSSEKQSPMAQQHSPLAQQSPLA). Residues 1010–1128 (ELNSPTSAPS…PDTRQYPLSD (119 aa)) are disordered. S1013 is subject to Phosphoserine. A compositionally biased stretch (basic and acidic residues) spans 1067–1083 (NSYRSEVKARQDVKPDI). Residues 1139–1221 (TVDMEKGAKG…RVRLLLKRGT (83 aa)) enclose the PDZ 6 domain.

The protein belongs to the MAGUK family. Interacts (via its WW domains) with DRPLA. Interacts (via its second PDZ domain) with PTEN (via unphosphorylated C-terminus); this interaction diminishes the degradation rate of PTEN. Interacts (via guanylate kinase domain) with DLGAP1. Interacts (via the PDZ domains) with GRIN2A, GRID2 and NLGN1. Interacts with CTNND2, CTNNB1 and MAGUIN-1. Interacts with ACVR2A, SMAD2 and SMAD3. Part of a complex consisting of MAGI2/ARIP1, ACVR2A, ACVR1B and SMAD3. May interact with HTR2A. Interacts with RAPGEF2. Identified in a complex with ACTN4, CASK, IQGAP1, NPHS1, SPTAN1 and SPTBN1. Interacts with DDN. Found in a complex, at least composed of KIDINS220, MAGI2, NTRK1 and RAPGEF2; the complex is mainly formed at late endosomes in a NGF-dependent manner. Interacts with RAPGEF2; the interaction occurs before or after nerve growth factor (NGF) stimulation. Interacts (via PDZ domain) with KIDINS220 (via C-terminal domain). Interacts with IGSF9 and HTR4. Interacts with DLL1. Found in a complex with IGSF9B and NLGN2; the interaction with IGSF9B is mediated via the PDZ 5 and PDZ 6 domains, while the interaction with NLGN2 is mediated via the WW1, WW2 and PDZ2 domains. Interacts (via PDZ 6 domain) with USH1G (via SAM domain); the interaction is triggered by phosphorylation of USH1G by CK2 and negatively regulates MAGI2-mediated endocytosis. Expressed throughout the retina except in the nuclear layers and the photoreceptor outer segments (at protein level). Highest retinal expression is observed in the outer plexiform layer, the outer limiting membrane and the inner segment of photoreceptor cells (at protein level). Expressed in brain.

The protein resides in the cytoplasm. Its subcellular location is the late endosome. It localises to the synapse. It is found in the synaptosome. The protein localises to the cell membrane. The protein resides in the cytoskeleton. Its subcellular location is the microtubule organizing center. It localises to the centrosome. It is found in the cell projection. The protein localises to the cilium. The protein resides in the centriole. Its subcellular location is the photoreceptor inner segment. It localises to the photoreceptor outer segment. Its function is as follows. Seems to act as a scaffold molecule at synaptic junctions by assembling neurotransmitter receptors and cell adhesion proteins. Plays a role in nerve growth factor (NGF)-induced recruitment of RAPGEF2 to late endosomes and neurite outgrowth. May play a role in regulating activin-mediated signaling in neuronal cells. Enhances the ability of PTEN to suppress AKT1 activation. Plays a role in receptor-mediated clathrin-dependent endocytosis which is required for ciliogenesis. In Mus musculus (Mouse), this protein is Membrane-associated guanylate kinase, WW and PDZ domain-containing protein 2 (Magi2).